The primary structure comprises 157 residues: MLRQFLFSTASRRLVRPMIAPHRSASSSLDKTEFTTPSQIVDYDDPPHLPVPEYPLRPDEPLETRKQRLLYQSRKRGMLENDLLLSTFVAKHLRDFSAAQTAQYDDLINGVSNDWDIFYWATETKPTPPQYDTEIMRMLKQHVKNEERVQRIRQPDL.

A mitochondrion-targeting transit peptide spans 1 to 24; it reads MLRQFLFSTASRRLVRPMIAPHRS.

The protein belongs to the SDHAF2 family. In terms of assembly, interacts with the flavoprotein subunit within the SDH catalytic dimer.

Its subcellular location is the mitochondrion matrix. Plays an essential role in the assembly of succinate dehydrogenase (SDH), an enzyme complex (also referred to as respiratory complex II) that is a component of both the tricarboxylic acid (TCA) cycle and the mitochondrial electron transport chain, and which couples the oxidation of succinate to fumarate with the reduction of ubiquinone (coenzyme Q) to ubiquinol. Required for flavinylation (covalent attachment of FAD) of the flavoprotein subunit of the SDH catalytic dimer. This chain is Succinate dehydrogenase assembly factor 2-B, mitochondrial, found in Drosophila persimilis (Fruit fly).